A 188-amino-acid chain; its full sequence is Elongation factor P (188 aa).

This sequence belongs to the elongation factor P family.

It localises to the cytoplasm. Its pathway is protein biosynthesis; polypeptide chain elongation. Its function is as follows. Involved in peptide bond synthesis. Stimulates efficient translation and peptide-bond synthesis on native or reconstituted 70S ribosomes in vitro. Probably functions indirectly by altering the affinity of the ribosome for aminoacyl-tRNA, thus increasing their reactivity as acceptors for peptidyl transferase. This Pelodictyon phaeoclathratiforme (strain DSM 5477 / BU-1) protein is Elongation factor P.